The sequence spans 76 residues: Conotoxin Im6.9 (76 aa).

A signal peptide spans 1–19 (MEKLTILLLVTAVLMSTQA). A propeptide spanning residues 20–45 (LMQSGIEKRQRAKIKFFSKRKTTAER) is cleaved from the precursor. 3 disulfide bridges follow: cysteine 51–cysteine 65, cysteine 58–cysteine 69, and cysteine 64–cysteine 73.

The protein belongs to the conotoxin O2 superfamily. Expressed by the venom duct.

The protein resides in the secreted. Functionally, probable neurotoxin. This Conus imperialis (Imperial cone) protein is Conotoxin Im6.9.